Reading from the N-terminus, the 586-residue chain is Alpha-1,2-mannosyltransferase MNN5 (586 aa).

Residues 1-29 (MLIRLKKRKILQVIVSAVVLILFFCSVHN) form the signal peptide. N-linked (GlcNAc...) asparagine glycosylation is found at Asn-113, Asn-136, Asn-259, and Asn-264.

The protein belongs to the MNN1/MNT family. In terms of assembly, interacts with SVP26. Glycosylated.

The protein localises to the golgi apparatus. The protein resides in the cis-Golgi network. Its pathway is protein modification; protein glycosylation. Its function is as follows. Responsible for addition of first and second mannose residues to the outer chain of core N-linked polysaccharides and to O-linked mannotriose. Implicated in late Golgi modifications. This is Alpha-1,2-mannosyltransferase MNN5 (MNN5) from Saccharomyces cerevisiae (strain ATCC 204508 / S288c) (Baker's yeast).